Consider the following 122-residue polypeptide: Small ribosomal subunit protein uS12 (122 aa).

At D89 the chain carries 3-methylthioaspartic acid.

The protein belongs to the universal ribosomal protein uS12 family. As to quaternary structure, part of the 30S ribosomal subunit. Contacts proteins S8 and S17. May interact with IF1 in the 30S initiation complex.

With S4 and S5 plays an important role in translational accuracy. In terms of biological role, interacts with and stabilizes bases of the 16S rRNA that are involved in tRNA selection in the A site and with the mRNA backbone. Located at the interface of the 30S and 50S subunits, it traverses the body of the 30S subunit contacting proteins on the other side and probably holding the rRNA structure together. The combined cluster of proteins S8, S12 and S17 appears to hold together the shoulder and platform of the 30S subunit. This chain is Small ribosomal subunit protein uS12, found in Neorickettsia sennetsu (strain ATCC VR-367 / Miyayama) (Ehrlichia sennetsu).